The following is a 217-amino-acid chain: tRNA (guanine-N(7)-)-methyltransferase (217 aa).

Positions 44, 69, 96, and 118 each coordinate S-adenosyl-L-methionine. The active site involves Asp-118. Residues Lys-122, Asp-154, and 191–194 (TEYE) each bind substrate.

Belongs to the class I-like SAM-binding methyltransferase superfamily. TrmB family.

It carries out the reaction guanosine(46) in tRNA + S-adenosyl-L-methionine = N(7)-methylguanosine(46) in tRNA + S-adenosyl-L-homocysteine. It participates in tRNA modification; N(7)-methylguanine-tRNA biosynthesis. Functionally, catalyzes the formation of N(7)-methylguanine at position 46 (m7G46) in tRNA. The protein is tRNA (guanine-N(7)-)-methyltransferase of Bacillus anthracis (strain CDC 684 / NRRL 3495).